Reading from the N-terminus, the 129-residue chain is Follitropin subunit beta (129 aa).

Residues 1–18 (MKTVQFCFLFCCWKAICC) form the signal peptide. 6 disulfides stabilise this stretch: Cys-21–Cys-69, Cys-35–Cys-84, Cys-38–Cys-122, Cys-46–Cys-100, Cys-50–Cys-102, and Cys-105–Cys-112. 2 N-linked (GlcNAc...) asparagine glycosylation sites follow: Asn-25 and Asn-42.

It belongs to the glycoprotein hormones subunit beta family. As to quaternary structure, heterodimer. The active follitropin is a heterodimer composed of an alpha chain/CGA shared with other hormones and a unique beta chain/FSHB shown here.

Its subcellular location is the secreted. Functionally, together with the alpha chain CGA constitutes follitropin, the follicle-stimulating hormone, and provides its biological specificity to the hormone heterodimer. Binds FSHR, a G protein-coupled receptor, on target cells to activate downstream signaling pathways. Follitropin is involved in follicle development and spermatogenesis in reproductive organs. The chain is Follitropin subunit beta (FSHB) from Macaca fascicularis (Crab-eating macaque).